A 413-amino-acid chain; its full sequence is Aspartate aminotransferase, cytoplasmic (413 aa).

L-aspartate-binding residues include Gly39 and Trp141. Ser149 carries the phosphoserine modification. Residue Asn195 coordinates L-aspartate. Lys259 is subject to N6-(pyridoxal phosphate)lysine. Arg387 is a binding site for L-aspartate.

It belongs to the class-I pyridoxal-phosphate-dependent aminotransferase family. As to quaternary structure, homodimer. It depends on pyridoxal 5'-phosphate as a cofactor.

It localises to the cytoplasm. It carries out the reaction L-aspartate + 2-oxoglutarate = oxaloacetate + L-glutamate. It catalyses the reaction L-cysteine + 2-oxoglutarate = 2-oxo-3-sulfanylpropanoate + L-glutamate. The catalysed reaction is (2S)-2-aminobutanoate + 2-oxoglutarate = 2-oxobutanoate + L-glutamate. The enzyme catalyses 3-sulfino-L-alanine + 2-oxoglutarate = 3-sulfinopyruvate + L-glutamate. In terms of biological role, biosynthesis of L-glutamate from L-aspartate or L-cysteine. Important regulator of levels of glutamate, the major excitatory neurotransmitter of the vertebrate central nervous system. Acts as a scavenger of glutamate in brain neuroprotection. The aspartate aminotransferase activity is involved in hepatic glucose synthesis during development and in adipocyte glyceroneogenesis. Using L-cysteine as substrate, regulates levels of mercaptopyruvate, an important source of hydrogen sulfide. Mercaptopyruvate is converted into H(2)S via the action of 3-mercaptopyruvate sulfurtransferase (3MST). Hydrogen sulfide is an important synaptic modulator and neuroprotectant in the brain. The chain is Aspartate aminotransferase, cytoplasmic from Macaca fascicularis (Crab-eating macaque).